The chain runs to 953 residues: Valine--tRNA ligase (953 aa).

The 'HIGH' region motif lies at 42-52 (PNVTGSLHMGH). The short motif at 554-558 (KMSKS) is the 'KMSKS' region element. ATP is bound at residue Lys557. Residues 884–952 (LIDKDAELDR…LEQQKATIAA (69 aa)) adopt a coiled-coil conformation.

This sequence belongs to the class-I aminoacyl-tRNA synthetase family. ValS type 1 subfamily. In terms of assembly, monomer.

Its subcellular location is the cytoplasm. The enzyme catalyses tRNA(Val) + L-valine + ATP = L-valyl-tRNA(Val) + AMP + diphosphate. In terms of biological role, catalyzes the attachment of valine to tRNA(Val). As ValRS can inadvertently accommodate and process structurally similar amino acids such as threonine, to avoid such errors, it has a 'posttransfer' editing activity that hydrolyzes mischarged Thr-tRNA(Val) in a tRNA-dependent manner. The protein is Valine--tRNA ligase of Vibrio cholerae serotype O1 (strain ATCC 39315 / El Tor Inaba N16961).